We begin with the raw amino-acid sequence, 712 residues long: MGQADISRPVNPDGVEEIGQPTADLGMVMDCVEAGDITPPTKRKSKFSGFGKIFKPWKWRKKKSDKFKETSEVLERKISMRKPREELVKRGLLLEDSEQGGEDPGKLSHATLKNGHTTLIGSTRSSSPVQVEEESERIASLRKPVPEEEPKKRLGSSGSQPHSEAEFVPESIPKQPLLPPKRHLSSSHEANEGQAKDATSSGSLARPSSSASTTAITTAPAATMAATNPAKTVHSSGPPSQAPRTLPAAPASTHTTATLSLTHTGPAKQPPIPPPKPTHRNSNPVIAELSQAINSGTLLSKPSPPLPPKRGIPSALVPTSESAAATTATKAPSDQREKSACSVGSEPLLTPSSSPLPAHIPPEPPQSPPFPAKTFQVVPEIEFPPSLDLPQEIPQQESQKREVPKRMLDHSFGEPQVPPRLPPVPLHIRIQQALTSPLPVTPPLEGSHRAHSLLFENSDNFSEDSSTLGRTRSLPITIEMLKVPDDEEEEEQSHIFAFDEDVASTSVIPKLPQCLQEEEEGKESDSDSEGPIQYRDEEDEDESHHSALANKVKRKDTLAMKLNHKPSEPEMNMNSWPRKSKEEWNEIRHQIGNTLIRRLSQRPTPEELEQRNILQPKNEADRQAEKREIKRRLTRKLSQRPTVAELLARKILRFNEYVEVTDAHDYDRRADKPWTKLTPADKAAIRKELNEFKSSEMEVHEDSKHFTRYHRP.

2 disordered regions span residues 1 to 22 (MGQADISRPVNPDGVEEIGQPT) and 90 to 405 (RGLL…EVPK). Residues 72–97 (EVLERKISMRKPREELVKRGLLLEDS) form an RPEL 1 repeat. Over residues 114–124 (NGHTTLIGSTR) the composition is skewed to polar residues. Phosphoserine is present on residues S125, S127, S140, and S156. Residues 136 to 152 (ERIASLRKPVPEEEPKK) are compositionally biased toward basic and acidic residues. A compositionally biased stretch (low complexity) spans 198–230 (ATSSGSLARPSSSASTTAITTAPAATMAATNPA). Residues 233 to 243 (VHSSGPPSQAP) are compositionally biased toward polar residues. Residues 245–267 (TLPAAPASTHTTATLSLTHTGPA) show a composition bias toward low complexity. Residues S282, S303, and S353 each carry the phosphoserine modification. Residues 345-357 (SEPLLTPSSSPLP) are compositionally biased toward low complexity. Pro residues predominate over residues 358–371 (AHIPPEPPQSPPFP). Position 436 is a phosphoserine (S436). T441 carries the phosphothreonine modification. Phosphoserine is present on residues S452, S462, S473, S524, S526, S567, and S600. Positions 507-557 (VIPKLPQCLQEEEEGKESDSDSEGPIQYRDEEDEDESHHSALANKVKRKDT) are disordered. Residues 516–528 (QEEEEGKESDSDS) show a composition bias toward acidic residues. RPEL repeat units follow at residues 593–618 (NTLIRRLSQRPTPEELEQRNILQPKN) and 631–656 (RRLTRKLSQRPTVAELLARKILRFNE). Residues 602 to 626 (RPTPEELEQRNILQPKNEADRQAEK) are disordered. Position 638 is a phosphoserine (S638).

Belongs to the phosphatase and actin regulator family. As to quaternary structure, binds PPP1CA and actin.

The protein resides in the cytoplasm. Its subcellular location is the cell projection. It is found in the lamellipodium. Its function is as follows. Regulator of protein phosphatase 1 (PP1) required for neural tube and optic fissure closure, and enteric neural crest cell (ENCCs) migration during development. Acts as an activator of PP1 by interacting with PPP1CA and preventing phosphorylation of PPP1CA at 'Thr-320'. During neural tube closure, localizes to the ventral neural tube and activates PP1, leading to down-regulate cell proliferation within cranial neural tissue and the neural retina. Also acts as a regulator of migration of enteric neural crest cells (ENCCs) by activating PP1, leading to dephosphorylation and subsequent activation of cofilin (COF1 or COF2) and repression of the integrin signaling through the RHO/ROCK pathway. This chain is Phosphatase and actin regulator 4 (PHACTR4), found in Bos taurus (Bovine).